The sequence spans 435 residues: Glutamate-1-semialdehyde 2,1-aminomutase (435 aa).

The residue at position 266 (Lys266) is an N6-(pyridoxal phosphate)lysine.

Belongs to the class-III pyridoxal-phosphate-dependent aminotransferase family. HemL subfamily. As to quaternary structure, homodimer. Pyridoxal 5'-phosphate is required as a cofactor.

Its subcellular location is the cytoplasm. The catalysed reaction is (S)-4-amino-5-oxopentanoate = 5-aminolevulinate. Its pathway is porphyrin-containing compound metabolism; protoporphyrin-IX biosynthesis; 5-aminolevulinate from L-glutamyl-tRNA(Glu): step 2/2. The chain is Glutamate-1-semialdehyde 2,1-aminomutase from Nitrosomonas europaea (strain ATCC 19718 / CIP 103999 / KCTC 2705 / NBRC 14298).